A 1909-amino-acid chain; its full sequence is NFX1-type zinc finger-containing protein 1 (1909 aa).

Basic and acidic residues-rich tracts occupy residues 1-12 and 76-107; these read MEDRRPHLEARP and RNQE…EGRS. Disordered stretches follow at residues 1 to 133 and 787 to 813; these read MEDR…QPQQ and TQSA…EEEG. The span at 113-122 shows a compositional bias: polar residues; that stretch reads SSDTFQQWHT. A compositionally biased stretch (acidic residues) spans 802–813; that stretch reads EGEEEEEGEEEG. Positions 939–964 form a coiled coil; sequence RRRILSYERQYRTWAERMAELRLQED. NF-X1-type zinc fingers lie at residues 1291–1313, 1375–1393, 1433–1455, and 1463–1480; these read CGHV…QCMK, CGHR…LCSE, CGHP…RCQQ, and CSHK…PCQR. Positions 1733 to 1764 form a coiled coil; that stretch reads LAKKRLSFSSQELSDLQSEIQRLTYLVNLLMR. The RZ-type zinc-finger motif lies at 1818-1889; that stretch reads ISDEERVQIV…LASEMDGAQH (72 aa). Cys1840, His1844, Cys1860, and Cys1863 together coordinate Zn(2+).

It belongs to the ZNFX1 family. Interacts with MAVS.

It localises to the mitochondrion outer membrane. It is found in the cytoplasm. The protein resides in the stress granule. Its function is as follows. RNA-binding protein that initiates the antiviral response and is required to restrict the replication of RNA viruses. Acts as a double-stranded RNA (dsRNA) sensor that recognizes viral RNA and then interacts with MAVS to initiate the type I interferon response. Also required for immunity against some bacteria, such as mycobacteria. The sequence is that of NFX1-type zinc finger-containing protein 1 from Mus musculus (Mouse).